The chain runs to 207 residues: Protein THEM6 (207 aa).

The N-terminal stretch at 1–21 (MLELLVASLSLALAFFALLDG) is a signal peptide. N188 is a glycosylation site (N-linked (GlcNAc...) asparagine). S199 is modified (phosphoserine).

This sequence belongs to the THEM6 family.

The protein resides in the secreted. This is Protein THEM6 (Them6) from Mus musculus (Mouse).